The primary structure comprises 330 residues: Fructose-1,6-bisphosphatase class 1 (330 aa).

Mg(2+) is bound by residues glutamate 84, aspartate 103, leucine 105, and aspartate 106. Substrate-binding positions include 106–109 (DGSS), asparagine 196, and lysine 262. Glutamate 268 contacts Mg(2+).

The protein belongs to the FBPase class 1 family. Homotetramer. Mg(2+) is required as a cofactor.

The protein localises to the cytoplasm. It carries out the reaction beta-D-fructose 1,6-bisphosphate + H2O = beta-D-fructose 6-phosphate + phosphate. Its pathway is carbohydrate biosynthesis; gluconeogenesis. The chain is Fructose-1,6-bisphosphatase class 1 from Shewanella sp. (strain W3-18-1).